A 352-amino-acid chain; its full sequence is Mannonate dehydratase (352 aa).

It belongs to the mannonate dehydratase family. Fe(2+) serves as cofactor. It depends on Mn(2+) as a cofactor.

The enzyme catalyses D-mannonate = 2-dehydro-3-deoxy-D-gluconate + H2O. It functions in the pathway carbohydrate metabolism; pentose and glucuronate interconversion. Functionally, catalyzes the dehydration of D-mannonate. In Paraburkholderia phytofirmans (strain DSM 17436 / LMG 22146 / PsJN) (Burkholderia phytofirmans), this protein is Mannonate dehydratase.